Here is a 559-residue protein sequence, read N- to C-terminus: Suppressor of tumorigenicity 7 protein-like (559 aa).

The next 3 helical transmembrane spans lie at 39–59 (GLANSGSTLWFLAGLGLLYAL), 83–103 (FYVALTGTSSLISGLIFIFEW), and 513–533 (LPFFIHFTAGLCSSTAMLAFL).

It belongs to the ST7 family. Ubiquitously expressed.

Its subcellular location is the membrane. This is Suppressor of tumorigenicity 7 protein-like (St7l) from Mus musculus (Mouse).